A 473-amino-acid chain; its full sequence is UDP-N-acetylmuramate--L-alanine ligase (473 aa).

An ATP-binding site is contributed by 112 to 118 (GTHGKTT).

The protein belongs to the MurCDEF family.

It is found in the cytoplasm. It catalyses the reaction UDP-N-acetyl-alpha-D-muramate + L-alanine + ATP = UDP-N-acetyl-alpha-D-muramoyl-L-alanine + ADP + phosphate + H(+). Its pathway is cell wall biogenesis; peptidoglycan biosynthesis. Its function is as follows. Cell wall formation. The sequence is that of UDP-N-acetylmuramate--L-alanine ligase from Nitrosomonas europaea (strain ATCC 19718 / CIP 103999 / KCTC 2705 / NBRC 14298).